The primary structure comprises 456 residues: Exodeoxyribonuclease 7 large subunit (456 aa).

Belongs to the XseA family. In terms of assembly, heterooligomer composed of large and small subunits.

Its subcellular location is the cytoplasm. It carries out the reaction Exonucleolytic cleavage in either 5'- to 3'- or 3'- to 5'-direction to yield nucleoside 5'-phosphates.. Bidirectionally degrades single-stranded DNA into large acid-insoluble oligonucleotides, which are then degraded further into small acid-soluble oligonucleotides. This Shigella boydii serotype 4 (strain Sb227) protein is Exodeoxyribonuclease 7 large subunit.